Consider the following 562-residue polypeptide: Probable sesquiterpene synthase (562 aa).

Residues D315, D319, and E467 each contribute to the Mg(2+) site. The DDXXD motif signature appears at 315–319 (DDIYD).

It belongs to the terpene synthase family. Tpsa subfamily. It depends on Mg(2+) as a cofactor. Mn(2+) is required as a cofactor.

In terms of biological role, sesquiterpene synthase. The protein is Probable sesquiterpene synthase (SesquiTPS) of Santalum spicatum (Australian sandalwood).